The sequence spans 419 residues: Tyrosine--tRNA ligase (419 aa).

Y34 serves as a coordination point for L-tyrosine. Positions 39–48 match the 'HIGH' region motif; that stretch reads PTADSLHLGH. Positions 169 and 173 each coordinate L-tyrosine. The 'KMSKS' region signature appears at 229-233; the sequence is KFGKS. K232 provides a ligand contact to ATP. Positions 352-419 constitute an S4 RNA-binding domain; the sequence is LNIIDLLVTS…KKKYFVLNFK (68 aa).

This sequence belongs to the class-I aminoacyl-tRNA synthetase family. TyrS type 1 subfamily. Homodimer.

The protein resides in the cytoplasm. It catalyses the reaction tRNA(Tyr) + L-tyrosine + ATP = L-tyrosyl-tRNA(Tyr) + AMP + diphosphate + H(+). Functionally, catalyzes the attachment of tyrosine to tRNA(Tyr) in a two-step reaction: tyrosine is first activated by ATP to form Tyr-AMP and then transferred to the acceptor end of tRNA(Tyr). The sequence is that of Tyrosine--tRNA ligase from Streptococcus agalactiae serotype Ia (strain ATCC 27591 / A909 / CDC SS700).